Consider the following 89-residue polypeptide: Large ribosomal subunit protein bL31B (89 aa).

It belongs to the bacterial ribosomal protein bL31 family. Type B subfamily. As to quaternary structure, part of the 50S ribosomal subunit.

The protein is Large ribosomal subunit protein bL31B of Aeromonas hydrophila subsp. hydrophila (strain ATCC 7966 / DSM 30187 / BCRC 13018 / CCUG 14551 / JCM 1027 / KCTC 2358 / NCIMB 9240 / NCTC 8049).